We begin with the raw amino-acid sequence, 395 residues long: Elongation factor Tu (395 aa).

In terms of domain architecture, tr-type G spans 10–204 (LPHVNIGTIG…AVDEYIPTPQ (195 aa)). Residues 19–26 (GHVDHGKT) form a G1 region. 19–26 (GHVDHGKT) contributes to the GTP binding site. Residue Thr-26 participates in Mg(2+) binding. Positions 60–64 (GITIN) are G2. The G3 stretch occupies residues 81-84 (DCPG). Residues 81–85 (DCPGH) and 136–139 (NKCD) each bind GTP. Positions 136 to 139 (NKCD) are G4. The segment at 174–176 (SAL) is G5.

Belongs to the TRAFAC class translation factor GTPase superfamily. Classic translation factor GTPase family. EF-Tu/EF-1A subfamily. Monomer.

It is found in the cytoplasm. The enzyme catalyses GTP + H2O = GDP + phosphate + H(+). Functionally, GTP hydrolase that promotes the GTP-dependent binding of aminoacyl-tRNA to the A-site of ribosomes during protein biosynthesis. The sequence is that of Elongation factor Tu from Mycoplasma capricolum subsp. capricolum (strain California kid / ATCC 27343 / NCTC 10154).